The primary structure comprises 201 residues: Riboflavin synthase (201 aa).

Lumazine-binding repeat units follow at residues 1–97 (MFTG…LGGH) and 98–197 (IVQG…ERLM). Residues 4-6 (GIV), 47-49 (CLT), 62-67 (DVMAET), 101-103 (GHV), lysine 136, 145-147 (SLT), and 162-167 (SLIPTT) each bind 2,4-dihydroxypteridine.

As to quaternary structure, homotrimer.

The enzyme catalyses 2 6,7-dimethyl-8-(1-D-ribityl)lumazine + H(+) = 5-amino-6-(D-ribitylamino)uracil + riboflavin. The protein operates within cofactor biosynthesis; riboflavin biosynthesis; riboflavin from 2-hydroxy-3-oxobutyl phosphate and 5-amino-6-(D-ribitylamino)uracil: step 2/2. Functionally, catalyzes the dismutation of two molecules of 6,7-dimethyl-8-ribityllumazine, resulting in the formation of riboflavin and 5-amino-6-(D-ribitylamino)uracil. The sequence is that of Riboflavin synthase (ribE) from Mycobacterium bovis (strain ATCC BAA-935 / AF2122/97).